The chain runs to 1107 residues: Phospholipid-transporting ATPase 2 (1107 aa).

Residues 1-33 are Cytoplasmic-facing; that stretch reads MKRFVYINDDEASKELCCDNRISNRKYTLWNFL. Residues 34 to 55 traverse the membrane as a helical segment; sequence PKNLWEQFSRFMNQYFLLIACL. The Extracellular portion of the chain corresponds to 56–60; it reads QLWSL. Residues 61–83 traverse the membrane as a helical segment; the sequence is ITPVNPASTWGPLIFIFAVSASK. The Cytoplasmic portion of the chain corresponds to 84-268; sequence EAWDDYHRYL…TAMDAMIDKL (185 aa). A helical transmembrane segment spans residues 269–290; that stretch reads TGAIFVFQIVVVLVLGIAGNVW. Residues 291–315 lie on the Extracellular side of the membrane; sequence KDTEARKQWYVQYPEEAPWYELLVI. The chain crosses the membrane as a helical span at residues 316 to 333; that stretch reads PLRFELLCSIMIPISIKV. The Cytoplasmic segment spans residues 334–807; it reads SLDLVKGLYA…HGRYSYNRTA (474 aa). Catalysis depends on Asp381, which acts as the 4-aspartylphosphate intermediate. 2 residues coordinate Mg(2+): Asp752 and Asp756. A helical transmembrane segment spans residues 808-827; sequence FLSQYSFYKSLLICFIQIFF. Over 828 to 841 the chain is Extracellular; the sequence is SFISGVSGTSLFNS. The chain crosses the membrane as a helical span at residues 842-860; sequence VSLMAYNVFYTSVPVLVSV. Over 861-890 the chain is Cytoplasmic; that stretch reads IDKDLSEASVMQHPQILFYCQAGRLLNPST. The helical transmembrane segment at 891–912 threads the bilayer; sequence FAGWFGRSLFHAIIVFVITIHA. The Extracellular segment spans residues 913–919; the sequence is YAYEKSE. Residues 920–942 form a helical membrane-spanning segment; that stretch reads MEELGMVALSGCIWLQAFVVAQE. Topologically, residues 943-948 are cytoplasmic; the sequence is TNSFTV. The chain crosses the membrane as a helical span at residues 949–969; the sequence is LQHLSIWGNLVGFYAINFLFS. Residues 970 to 982 are Extracellular-facing; sequence AIPSSGMYTIMFR. The chain crosses the membrane as a helical span at residues 983-1007; that stretch reads LCSQPSYWITMFLIVGAGMGPIFAL. Over 1008–1107 the chain is Cytoplasmic; sequence KYFRYTYRPS…SGYTRNCKDN (100 aa). The segment at 1048-1075 is disordered; that stretch reads DLSPISITQPKNRSPVYEPLLSDSPNAT. The residue at position 1050 (Ser1050) is a Phosphoserine.

It belongs to the cation transport ATPase (P-type) (TC 3.A.3) family. Type IV subfamily. Interacts with ALIS1, ALIS3 and ALIS5 in a heterologous system.

The protein resides in the endoplasmic reticulum membrane. It localises to the prevacuolar compartment membrane. It carries out the reaction ATP + H2O + phospholipidSide 1 = ADP + phosphate + phospholipidSide 2.. Functionally, involved in transport of phospholipids. Contributes to transmembrane flipping of lipids. Requires an interaction with a protein of the ALIS family for activity. Specific for phosphatidylserine and has no activity with lysolipid, phosphatidylcholine or phosphatidylethanolamine. This chain is Phospholipid-transporting ATPase 2, found in Arabidopsis thaliana (Mouse-ear cress).